The following is a 347-amino-acid chain: Putative phosphoesterase 078R (347 aa).

The a divalent metal cation site is built by Asp-52, Asn-87, and His-211.

It belongs to the metallophosphoesterase superfamily. IIV-6 244L family.

The chain is Putative phosphoesterase 078R from Invertebrate iridescent virus 3 (IIV-3).